The primary structure comprises 338 residues: RNA 3'-terminal phosphate cyclase (338 aa).

ATP contacts are provided by residues Q103 and 283-287 (YLADQ). H308 acts as the Tele-AMP-histidine intermediate in catalysis.

Belongs to the RNA 3'-terminal cyclase family. Type 1 subfamily.

The protein localises to the cytoplasm. The enzyme catalyses a 3'-end 3'-phospho-ribonucleotide-RNA + ATP = a 3'-end 2',3'-cyclophospho-ribonucleotide-RNA + AMP + diphosphate. Catalyzes the conversion of 3'-phosphate to a 2',3'-cyclic phosphodiester at the end of RNA. The mechanism of action of the enzyme occurs in 3 steps: (A) adenylation of the enzyme by ATP; (B) transfer of adenylate to an RNA-N3'P to produce RNA-N3'PP5'A; (C) and attack of the adjacent 2'-hydroxyl on the 3'-phosphorus in the diester linkage to produce the cyclic end product. The biological role of this enzyme is unknown but it is likely to function in some aspects of cellular RNA processing. This Escherichia coli O81 (strain ED1a) protein is RNA 3'-terminal phosphate cyclase.